The sequence spans 717 residues: Cleavage stimulation factor subunit 3 (717 aa).

At Ser2 the chain carries N-acetylserine. 9 HAT repeats span residues 45–77 (QPID…AEIK), 79–110 (KNYD…YVRE), 117–152 (SYKE…FLKG), 163–196 (QRIT…YEEG), 221–261 (KEYE…WEKS), 271–303 (LITK…YLEQ), 319–352 (LFSD…YEES), 354–387 (MKYE…FARR), and 458–494 (NEDN…FESN). Positions 684-705 (VKRPNEDSDEDEEKGAVVPPVH) are disordered. Phosphoserine is present on Ser691.

In terms of assembly, homodimer. The CSTF complex is composed of CSTF1 (50 kDa subunit), CSTF2 (64 kDa subunit) and CSTF3 (77 kDa subunit). CSTF3 directly interacts with CSTF1 and CSTF2. Interacts with FIP1L1.

The protein localises to the nucleus. Functionally, one of the multiple factors required for polyadenylation and 3'-end cleavage of mammalian pre-mRNAs. This is Cleavage stimulation factor subunit 3 (CSTF3) from Homo sapiens (Human).